A 699-amino-acid polypeptide reads, in one-letter code: D-(-)-3-hydroxybutyrate oligomer hydrolase (699 aa).

A signal peptide spans 1–33 (MTAIRGGSRRAPGLALALLGGVLLGACHGDENA). Ser311 functions as the Charge relay system in the catalytic mechanism.

Belongs to the D-(-)-3-hydroxybutyrate oligomer hydrolase family.

The protein resides in the secreted. It catalyses the reaction (3R)-hydroxybutanoate dimer + H2O = 2 (R)-3-hydroxybutanoate + H(+). Its pathway is lipid metabolism; butanoate metabolism. In terms of biological role, participates in the degradation of poly-3-hydroxybutyrate (PHB). It works downstream of poly(3-hydroxybutyrate) depolymerase, hydrolyzing D(-)-3-hydroxybutyrate oligomers of various length (3HB-oligomers) into 3HB-monomers. In Burkholderia mallei (strain SAVP1), this protein is D-(-)-3-hydroxybutyrate oligomer hydrolase.